Consider the following 194-residue polypeptide: Ribonuclease HII (194 aa).

An RNase H type-2 domain is found at Cys16–Cys194. 3 residues coordinate a divalent metal cation: Asp22, Glu23, and Asp113.

It belongs to the RNase HII family. The cofactor is Mn(2+). Mg(2+) serves as cofactor.

The protein localises to the cytoplasm. It catalyses the reaction Endonucleolytic cleavage to 5'-phosphomonoester.. Endonuclease that specifically degrades the RNA of RNA-DNA hybrids. In Rickettsia massiliae (strain Mtu5), this protein is Ribonuclease HII.